The sequence spans 402 residues: MSKLVPPHGGDKLKPLALEGNSLMAELEKAKLLLKVSCSSREVGDIIMMGIGGFTPLEGFMDNVNWQSVCDNMTMSSGLFWPIPITLSTNSEDIKQGDEVALVNGETDDIIATMVVSEKYSIDKSHECNTVYRTTEMAHPGVVMVMAQGKYNLAGSIKVLSDGNFPEKYGSLYMTPMETRAYFDDKGWKTIAAFQTRNPMHRSHEYLAKIAVEICDGVMIHSVLGGLKDGDIPADVRSEAISVLIKNYFVDNTILQSGYPLDMRYAGPREALLHALFRQNYGCSHLIVGRDHAGVNDYYGPFDAHNIFNVIANDALVTKALKFDWTFWCHKCGGISSMRTCPHNSEDRVLLSGTEVRKILSENKELPETFSRPEVAKVLQVYYASIKDEDKIEIKLNDHFTK.

This sequence belongs to the sulfate adenylyltransferase family.

It carries out the reaction sulfate + ATP + H(+) = adenosine 5'-phosphosulfate + diphosphate. It participates in sulfur metabolism; hydrogen sulfide biosynthesis; sulfite from sulfate: step 1/3. The polypeptide is Sulfate adenylyltransferase (Vesicomyosocius okutanii subsp. Calyptogena okutanii (strain HA)).